The sequence spans 415 residues: L-threonine dehydratase biosynthetic IlvA (415 aa).

An N6-(pyridoxal phosphate)lysine modification is found at K53. Pyridoxal 5'-phosphate contacts are provided by residues N80, 183–187, and S308; that span reads GGGGL. In terms of domain architecture, ACT-like spans 332-406; it reads HYFIIQFPQR…KGFEYREINK (75 aa).

This sequence belongs to the serine/threonine dehydratase family. As to quaternary structure, homotetramer. Requires pyridoxal 5'-phosphate as cofactor.

It catalyses the reaction L-threonine = 2-oxobutanoate + NH4(+). It participates in amino-acid biosynthesis; L-isoleucine biosynthesis; 2-oxobutanoate from L-threonine: step 1/1. In terms of biological role, catalyzes the anaerobic formation of alpha-ketobutyrate and ammonia from threonine in a two-step reaction. The first step involved a dehydration of threonine and a production of enamine intermediates (aminocrotonate), which tautomerizes to its imine form (iminobutyrate). Both intermediates are unstable and short-lived. The second step is the nonenzymatic hydrolysis of the enamine/imine intermediates to form 2-ketobutyrate and free ammonia. In the low water environment of the cell, the second step is accelerated by RidA. This chain is L-threonine dehydratase biosynthetic IlvA (ilvA), found in Halalkalibacterium halodurans (strain ATCC BAA-125 / DSM 18197 / FERM 7344 / JCM 9153 / C-125) (Bacillus halodurans).